A 445-amino-acid polypeptide reads, in one-letter code: V-type proton ATPase subunit H (445 aa).

This sequence belongs to the V-ATPase H subunit family. V-ATPase is a heteromultimeric enzyme composed of a peripheral catalytic V1 complex (components A to H) attached to an integral membrane V0 proton pore complex (components: a, c, c', c'' and d).

Functionally, subunit of the peripheral V1 complex of vacuolar ATPase. Subunit H activates the ATPase activity of the enzyme and couples ATPase activity to proton flow. Vacuolar ATPase is responsible for acidifying a variety of intracellular compartments in eukaryotic cells, thus providing most of the energy required for transport processes in the vacuolar system. The chain is V-type proton ATPase subunit H (vatH) from Dictyostelium discoideum (Social amoeba).